The chain runs to 354 residues: Uroporphyrinogen decarboxylase (354 aa).

Substrate is bound by residues 27–31 (RQAGR), D77, Y154, T209, and H327.

The protein belongs to the uroporphyrinogen decarboxylase family. In terms of assembly, homodimer.

It localises to the cytoplasm. The enzyme catalyses uroporphyrinogen III + 4 H(+) = coproporphyrinogen III + 4 CO2. Its pathway is porphyrin-containing compound metabolism; protoporphyrin-IX biosynthesis; coproporphyrinogen-III from 5-aminolevulinate: step 4/4. Its function is as follows. Catalyzes the decarboxylation of four acetate groups of uroporphyrinogen-III to yield coproporphyrinogen-III. The sequence is that of Uroporphyrinogen decarboxylase from Pectobacterium carotovorum subsp. carotovorum (strain PC1).